Reading from the N-terminus, the 639-residue chain is 3D-(3,5/4)-trihydroxycyclohexane-1,2-dione hydrolase (639 aa).

Glu-65 contacts thiamine diphosphate. The tract at residues 437-517 (SLPGDLQRMW…INIILFDNSG (81 aa)) is thiamine pyrophosphate binding. Residues Asp-488 and Asn-515 each contribute to the Mg(2+) site.

It belongs to the TPP enzyme family. Mg(2+) is required as a cofactor. It depends on thiamine diphosphate as a cofactor.

It carries out the reaction 3D-3,5/4-trihydroxycyclohexane-1,2-dione + H2O = 5-deoxy-D-glucuronate + H(+). It participates in polyol metabolism; myo-inositol degradation into acetyl-CoA; acetyl-CoA from myo-inositol: step 3/7. Involved in the cleavage of the C1-C2 bond of 3D-(3,5/4)-trihydroxycyclohexane-1,2-dione (THcHDO) to yield 5-deoxy-glucuronate (5DG). The polypeptide is 3D-(3,5/4)-trihydroxycyclohexane-1,2-dione hydrolase (Geobacillus thermodenitrificans (strain NG80-2)).